Here is a 287-residue protein sequence, read N- to C-terminus: Glycine--tRNA ligase alpha subunit (287 aa).

This sequence belongs to the class-II aminoacyl-tRNA synthetase family. In terms of assembly, tetramer of two alpha and two beta subunits.

Its subcellular location is the cytoplasm. The catalysed reaction is tRNA(Gly) + glycine + ATP = glycyl-tRNA(Gly) + AMP + diphosphate. The sequence is that of Glycine--tRNA ligase alpha subunit from Campylobacter jejuni subsp. jejuni serotype O:23/36 (strain 81-176).